The chain runs to 170 residues: Large ribosomal subunit protein uL5 (170 aa).

Belongs to the universal ribosomal protein uL5 family. Component of the large ribosomal subunit.

It is found in the nucleus. The protein localises to the cytoplasm. In terms of biological role, component of the ribosome, a large ribonucleoprotein complex responsible for the synthesis of proteins in the cell. The small ribosomal subunit (SSU) binds messenger RNAs (mRNAs) and translates the encoded message by selecting cognate aminoacyl-transfer RNA (tRNA) molecules. The large subunit (LSU) contains the ribosomal catalytic site termed the peptidyl transferase center (PTC), which catalyzes the formation of peptide bonds, thereby polymerizing the amino acids delivered by tRNAs into a polypeptide chain. The nascent polypeptides leave the ribosome through a tunnel in the LSU and interact with protein factors that function in enzymatic processing, targeting, and the membrane insertion of nascent chains at the exit of the ribosomal tunnel. This Chlamydomonas reinhardtii (Chlamydomonas smithii) protein is Large ribosomal subunit protein uL5 (RPL11).